A 289-amino-acid chain; its full sequence is NAD kinase (289 aa).

Asp-68 functions as the Proton acceptor in the catalytic mechanism. NAD(+) contacts are provided by residues 68–69 (DG), Lys-73, 142–143 (ND), Arg-153, Asp-172, 183–188 (TAYSLS), and Gln-243.

The protein belongs to the NAD kinase family. A divalent metal cation serves as cofactor.

The protein resides in the cytoplasm. The catalysed reaction is NAD(+) + ATP = ADP + NADP(+) + H(+). Functionally, involved in the regulation of the intracellular balance of NAD and NADP, and is a key enzyme in the biosynthesis of NADP. Catalyzes specifically the phosphorylation on 2'-hydroxyl of the adenosine moiety of NAD to yield NADP. The polypeptide is NAD kinase (Acetivibrio thermocellus (strain ATCC 27405 / DSM 1237 / JCM 9322 / NBRC 103400 / NCIMB 10682 / NRRL B-4536 / VPI 7372) (Clostridium thermocellum)).